A 542-amino-acid chain; its full sequence is CTP synthase (542 aa).

Residues 1-265 form an amidoligase domain region; the sequence is MTKYIFVTGG…LKPISKELSL (265 aa). Residue Ser-13 participates in CTP binding. Ser-13 provides a ligand contact to UTP. Residues 14 to 19 and Asp-71 each bind ATP; that span reads SLGKGI. Asp-71 and Glu-139 together coordinate Mg(2+). CTP is bound by residues 146-148, 186-191, and Lys-222; these read DIE and KSKPTQ. Residues 186–191 and Lys-222 contribute to the UTP site; that span reads KSKPTQ. The 252-residue stretch at 290 to 541 folds into the Glutamine amidotransferase type-1 domain; the sequence is VLGFVGKYLE…VEATLAISQE (252 aa). An L-glutamine-binding site is contributed by Gly-352. Catalysis depends on Cys-379, which acts as the Nucleophile; for glutamine hydrolysis. Residues 380-383, Glu-403, and Arg-471 contribute to the L-glutamine site; that span reads LGMQ. Active-site residues include His-514 and Glu-516.

The protein belongs to the CTP synthase family. As to quaternary structure, homotetramer.

The catalysed reaction is UTP + L-glutamine + ATP + H2O = CTP + L-glutamate + ADP + phosphate + 2 H(+). It catalyses the reaction L-glutamine + H2O = L-glutamate + NH4(+). The enzyme catalyses UTP + NH4(+) + ATP = CTP + ADP + phosphate + 2 H(+). It participates in pyrimidine metabolism; CTP biosynthesis via de novo pathway; CTP from UDP: step 2/2. Allosterically activated by GTP, when glutamine is the substrate; GTP has no effect on the reaction when ammonia is the substrate. The allosteric effector GTP functions by stabilizing the protein conformation that binds the tetrahedral intermediate(s) formed during glutamine hydrolysis. Inhibited by the product CTP, via allosteric rather than competitive inhibition. Its function is as follows. Catalyzes the ATP-dependent amination of UTP to CTP with either L-glutamine or ammonia as the source of nitrogen. Regulates intracellular CTP levels through interactions with the four ribonucleotide triphosphates. This is CTP synthase from Sulfurimonas denitrificans (strain ATCC 33889 / DSM 1251) (Thiomicrospira denitrificans (strain ATCC 33889 / DSM 1251)).